Consider the following 394-residue polypeptide: GPI transamidase component GAB1 (394 aa).

The Cytoplasmic segment spans residues 1–135; the sequence is MDSTALKVAL…TLLSCISRSS (135 aa). A helical transmembrane segment spans residues 136 to 156; that stretch reads IIFTNFAISSSLYCILAEGNV. Over 157-160 the chain is Lumenal; that stretch reads LLSS. The chain crosses the membrane as a helical span at residues 161–181; sequence VMISISGYLSVYPILLLIPLL. Residues 182–190 are Cytoplasmic-facing; the sequence is GMLKSWRQR. The helical transmembrane segment at 191 to 211 threads the bilayer; it reads ILSAIVSILSLLILLLFSYSI. Topologically, residues 212–224 are lumenal; sequence LGSQSWSFLTQVY. Residues 225–245 form a helical membrane-spanning segment; it reads GSIITFEKVFPNLGLWWYFFI. The may be involved in recognition of long-chain fatty acids in GPI stretch occupies residues 235-255; it reads PNLGLWWYFFIEMFDTFIPFF. Residues 246–250 are Cytoplasmic-facing; that stretch reads EMFDT. The helical transmembrane segment at 251–271 threads the bilayer; that stretch reads FIPFFKAVFNIFIAVFITPFT. Residues 272–297 lie on the Lumenal side of the membrane; it reads LRYHKQPFYAFILCIGWIVLTKPYPS. Residues 298–318 form a helical membrane-spanning segment; it reads LGDAGFFFSFLPFFTPLFGYL. The Cytoplasmic portion of the chain corresponds to 319–324; it reads RYPIIS. A helical transmembrane segment spans residues 325-345; the sequence is ALLFLHAIVLAPIFYHLWVVL. Topologically, residues 346–351 are lumenal; it reads GSGNSN. A helical transmembrane segment spans residues 352 to 372; that stretch reads FFYAISLVYALAIASILVDLN. Residues 373–394 lie on the Cytoplasmic side of the membrane; it reads WAMLRIEYDNGIPNFKLKVTQI.

This sequence belongs to the PIGU family. As to quaternary structure, forms a complex with GPI16, GPI17, GPI8 and GAA1.

It localises to the endoplasmic reticulum membrane. The protein operates within glycolipid biosynthesis; glycosylphosphatidylinositol-anchor biosynthesis. Functionally, component of the GPI transamidase complex. May be involved in the recognition of either the GPI attachment signal or the lipid portion of GPI. In Saccharomyces cerevisiae (strain ATCC 204508 / S288c) (Baker's yeast), this protein is GPI transamidase component GAB1 (GAB1).